The chain runs to 244 residues: Eukaryotic translation initiation factor 6 (244 aa).

A phosphoserine; by CK1 mark is found at Ser-174 and Ser-175.

It belongs to the eIF-6 family. As to quaternary structure, monomer. Associates with the 60S ribosomal subunit. Post-translationally, phosphorylation at Ser-174 and Ser-175 promotes nuclear export.

It localises to the cytoplasm. The protein resides in the nucleus. Its subcellular location is the nucleolus. Its function is as follows. Binds to the 60S ribosomal subunit and prevents its association with the 40S ribosomal subunit to form the 80S initiation complex in the cytoplasm. Is also involved in ribosome biogenesis. Associates with pre-60S subunits in the nucleus and is involved in its nuclear export. The polypeptide is Eukaryotic translation initiation factor 6 (tif6) (Schizosaccharomyces pombe (strain 972 / ATCC 24843) (Fission yeast)).